Reading from the N-terminus, the 256-residue chain is uncharacterized protein (256 aa).

6 helical membrane-spanning segments follow: residues 6-26 (TSFI…VSFL), 29-49 (LALV…GTFI), 61-81 (ISGT…GLYF), 145-165 (IIGC…TGIA), 175-195 (YYFK…IWLI), and 218-238 (IGWL…AIQF).

This sequence belongs to the DedA family.

The protein localises to the cell membrane. This is an uncharacterized protein from Buchnera aphidicola subsp. Acyrthosiphon pisum (strain APS) (Acyrthosiphon pisum symbiotic bacterium).